A 127-amino-acid chain; its full sequence is Small ribosomal subunit protein uS13 (127 aa).

The segment at 93 to 127 is disordered; that stretch reads RQGLPVRGQRTRTNGRTRRGRRVTVAGKKKAPAKK. The span at 101-127 shows a compositional bias: basic residues; it reads QRTRTNGRTRRGRRVTVAGKKKAPAKK.

This sequence belongs to the universal ribosomal protein uS13 family. Part of the 30S ribosomal subunit. Forms a loose heterodimer with protein S19. Forms two bridges to the 50S subunit in the 70S ribosome.

Its function is as follows. Located at the top of the head of the 30S subunit, it contacts several helices of the 16S rRNA. In the 70S ribosome it contacts the 23S rRNA (bridge B1a) and protein L5 of the 50S subunit (bridge B1b), connecting the 2 subunits; these bridges are implicated in subunit movement. Contacts the tRNAs in the A and P-sites. This is Small ribosomal subunit protein uS13 from Crocosphaera subtropica (strain ATCC 51142 / BH68) (Cyanothece sp. (strain ATCC 51142)).